We begin with the raw amino-acid sequence, 522 residues long: Endochitinase 11 (522 aa).

Residues 1–24 form the signal peptide; it reads MLFSMVMFTERWWVGSKDCPRVPA. Asparagine 148 and asparagine 275 each carry an N-linked (GlcNAc...) asparagine glycan. One can recognise a GH18 domain in the interval 235–522; sequence KHVYAPYVDF…ALTCLRNSTA (288 aa). Residue glutamate 346 is the Proton donor of the active site. Residues asparagine 455 and asparagine 519 are each glycosylated (N-linked (GlcNAc...) asparagine).

This sequence belongs to the glycosyl hydrolase 18 family. Chitinase class V subfamily.

It localises to the secreted. The enzyme catalyses Random endo-hydrolysis of N-acetyl-beta-D-glucosaminide (1-&gt;4)-beta-linkages in chitin and chitodextrins.. Secreted chitinase involved in the degradation of chitin, a component of the cell walls of fungi and exoskeletal elements of some animals (including worms and arthropods). Participates in the infection process and directly acts in the penetration process of the host cuticle. This Metarhizium anisopliae (Entomophthora anisopliae) protein is Endochitinase 11 (chi11).